We begin with the raw amino-acid sequence, 380 residues long: Selenoprotein P (380 aa).

A signal peptide spans methionine 1–alanine 19. A non-standard amino acid (selenocysteine) is located at residue selenocysteine 59. Asparagine 83, asparagine 176, and asparagine 195 each carry an N-linked (GlcNAc...) asparagine glycan. The tract at residues lysine 196–glutamate 257 is disordered. Over residues serine 221–proline 237 the composition is skewed to polar residues. Residues leucine 241–glutamine 253 are compositionally biased toward basic residues. Position 259 (selenocysteine 259) is a non-standard amino acid, selenocysteine. At serine 264 the chain carries Phosphoserine. Non-standard amino acids (selenocysteine) are located at selenocysteine 277, selenocysteine 318, selenocysteine 330, and selenocysteine 352. The disordered stretch occupies residues arginine 346–asparagine 380. The span at proline 348 to methionine 360 shows a compositional bias: low complexity. Asparagine 365 is a glycosylation site (N-linked (GlcNAc...) asparagine). Non-standard amino acids (selenocysteine) are located at selenocysteine 366 and selenocysteine 368. Residue asparagine 370 is glycosylated (N-linked (GlcNAc...) asparagine). Residues selenocysteine 375 and selenocysteine 377 are each a non-standard amino acid (selenocysteine).

The protein belongs to the selenoprotein P family. Post-translationally, phosphorylation sites are present in the extracellular medium. In the kidney, expressed in the cortex with no expression observed in the medulla (at protein level). Expressed by the liver and secreted in plasma.

Its subcellular location is the secreted. Functionally, might be responsible for some of the extracellular antioxidant defense properties of selenium or might be involved in the transport of selenium. May supply selenium to tissues such as brain and testis. In Mus musculus (Mouse), this protein is Selenoprotein P.